The sequence spans 968 residues: Isoleucine--tRNA ligase (968 aa).

Positions 68-78 match the 'HIGH' region motif; that stretch reads PYANGALHMGH. Glu-582 serves as a coordination point for L-isoleucyl-5'-AMP. Positions 623–627 match the 'KMSKS' region motif; sequence KMSKS. An ATP-binding site is contributed by Lys-626. Positions 936, 939, 956, and 959 each coordinate Zn(2+).

It belongs to the class-I aminoacyl-tRNA synthetase family. IleS type 1 subfamily. In terms of assembly, monomer. It depends on Zn(2+) as a cofactor.

It is found in the cytoplasm. It catalyses the reaction tRNA(Ile) + L-isoleucine + ATP = L-isoleucyl-tRNA(Ile) + AMP + diphosphate. Catalyzes the attachment of isoleucine to tRNA(Ile). As IleRS can inadvertently accommodate and process structurally similar amino acids such as valine, to avoid such errors it has two additional distinct tRNA(Ile)-dependent editing activities. One activity is designated as 'pretransfer' editing and involves the hydrolysis of activated Val-AMP. The other activity is designated 'posttransfer' editing and involves deacylation of mischarged Val-tRNA(Ile). This Prochlorococcus marinus (strain AS9601) protein is Isoleucine--tRNA ligase.